Here is a 119-residue protein sequence, read N- to C-terminus: Protein phosphatase EYA3 (119 aa).

This sequence belongs to the HAD-like hydrolase superfamily. EYA family. Mg(2+) is required as a cofactor.

It is found in the cytoplasm. The protein resides in the nucleus. It carries out the reaction O-phospho-L-tyrosyl-[protein] + H2O = L-tyrosyl-[protein] + phosphate. Tyrosine phosphatase that specifically dephosphorylates 'Tyr-142' of histone H2AX (H2AXY142ph). 'Tyr-142' phosphorylation of histone H2AX plays a central role in DNA repair and acts as a mark that distinguishes between apoptotic and repair responses to genotoxic stress. Promotes efficient DNA repair by dephosphorylating H2AX, promoting the recruitment of DNA repair complexes containing MDC1. Its function as histone phosphatase probably explains its role in transcription regulation during organogenesis. May be involved in development of the eye. The protein is Protein phosphatase EYA3 (EYA3) of Gallus gallus (Chicken).